The sequence spans 258 residues: Type II restriction enzyme HincII (258 aa).

It catalyses the reaction Endonucleolytic cleavage of DNA to give specific double-stranded fragments with terminal 5'-phosphates.. Its function is as follows. A P subtype restriction enzyme that recognizes the double-stranded sequence 5'-GTYRAC-3' and cleaves after Y-3. The protein is Type II restriction enzyme HincII (hincIIR) of Haemophilus influenzae.